A 299-amino-acid chain; its full sequence is GTPase Era (299 aa).

Residues 5 to 172 (KSGFVSIIGR…IDVLKSFLPE (168 aa)) enclose the Era-type G domain. Residues 13 to 20 (GRPNVGKS) form a G1 region. 13–20 (GRPNVGKS) is a GTP binding site. A G2 region spans residues 39–43 (QTTRN). Residues 60 to 63 (DTPG) are G3. GTP contacts are provided by residues 60–64 (DTPGI) and 122–125 (NKID). A G4 region spans residues 122-125 (NKID). Positions 151 to 153 (ISA) are G5. One can recognise a KH type-2 domain in the interval 203–280 (TSEEIPHAIG…YLELWVKVQR (78 aa)).

The protein belongs to the TRAFAC class TrmE-Era-EngA-EngB-Septin-like GTPase superfamily. Era GTPase family. In terms of assembly, monomer.

The protein localises to the cytoplasm. It is found in the cell membrane. An essential GTPase that binds both GDP and GTP, with rapid nucleotide exchange. Plays a role in 16S rRNA processing and 30S ribosomal subunit biogenesis and possibly also in cell cycle regulation and energy metabolism. The protein is GTPase Era of Staphylococcus epidermidis (strain ATCC 12228 / FDA PCI 1200).